A 246-amino-acid chain; its full sequence is Transmembrane and ubiquitin-like domain-containing protein 1 (246 aa).

The required to release iHOPS from membranes stretch occupies residues 2–30; the sequence is ALIEGVGDEVTILFSALACLLVLALAWVS. The helical transmembrane segment at 11-31 threads the bilayer; it reads VTILFSALACLLVLALAWVST. The disordered stretch occupies residues 35–102; that stretch reads EGADPLPQPS…PPPPDSPQEP (68 aa). The span at 40 to 50 shows a compositional bias: pro residues; that stretch reads LPQPSGTPTPT. A phosphothreonine mark is found at threonine 71 and threonine 92. Phosphoserine occurs at positions 98 and 127. The 74-residue stretch at 103-176 folds into the Ubiquitin-like domain; it reads LVLRLKFLND…LHCHVSTRVG (74 aa). A run of 2 helical transmembrane segments spans residues 195–215 and 221–241; these read VGSLLLPLLLLLLLLLWYCQI and FPLTATLGLAGFTLLLSLLAF.

As to quaternary structure, interacts with EEF1A1, GRIA2, GRIP1, CAMLG, TUBG1. Interacts with NPM1 and CDKN2A; TMUB1 can enhance interaction between NPM1 and CDKN2A and is proposed to bridge the proteins; proposed to be mediated by iHOPS. Interacts with ERLIN2 and AMFR; TMUB1 promotes the interaction of ERLIN2 with AMFR. Post-translationally, processed by regulated intramembrane proteolysis (RIP) in the N-terminus to release iHOPS from membranes.

Its subcellular location is the membrane. The protein localises to the postsynaptic cell membrane. It is found in the recycling endosome. The protein resides in the cytoplasm. It localises to the nucleus. Its subcellular location is the nucleolus. The protein localises to the cytoskeleton. It is found in the microtubule organizing center. The protein resides in the centrosome. Involved in sterol-regulated ubiquitination and degradation of HMG-CoA reductase HMGCR. Involved in positive regulation of AMPA-selective glutamate receptor GRIA2 recycling to the cell surface. Acts as negative regulator of hepatocyte growth during regeneration. Its function is as follows. May contribute to the regulation of translation during cell-cycle progression. May contribute to the regulation of cell proliferation. May be involved in centrosome assembly. Modulates stabilization and nucleolar localization of tumor suppressor CDKN2A and enhances association between CDKN2A and NPM1. This is Transmembrane and ubiquitin-like domain-containing protein 1 (TMUB1) from Bos taurus (Bovine).